A 72-amino-acid polypeptide reads, in one-letter code: Conotoxin LiC53 (72 aa).

A signal peptide spans 1–23 (MEKLTSLLLVAALLMLTQTLIQG). A propeptide spanning residues 24-41 (GGEDRPNKKFLQKIKSTA) is cleaved from the precursor. Intrachain disulfides connect Cys45–Cys59, Cys52–Cys63, and Cys58–Cys68.

Belongs to the conotoxin O2 superfamily. In terms of tissue distribution, expressed by the venom duct.

The protein localises to the secreted. The protein is Conotoxin LiC53 of Conus lividus (Livid cone).